The sequence spans 246 residues: MPIQPSGKETEEMEAEGDSAAEMNGEADESEEERSGSQTESEEESSEMDDEDYERRRSECVSEMLDLEKQFSELKEKLFRERLSQLRLRLEEVGAERAPEYTEPLGGLQQSLKIRIQVAGIYKGFCLDVIRNKYECELQGAKQHLESEKLLLYDTLLGELQERIQRLEEDRQSLDISSEWWDDKLHSRGSSKTWDSVPPSKRKKAPLVSGPYIVYMLQEIDILEDWTAIKKARAAVSPQKRKADGP.

The interval 1–57 (MPIQPSGKETEEMEAEGDSAAEMNGEADESEEERSGSQTESEEESSEMDDEDYERRR) is disordered. 2 stretches are compositionally biased toward acidic residues: residues 11 to 32 (EEME…ESEE) and 40 to 52 (ESEE…DDED). Positions 51-98 (EDYERRRSECVSEMLDLEKQFSELKEKLFRERLSQLRLRLEEVGAERA) form a coiled coil. Glycyl lysine isopeptide (Lys-Gly) (interchain with G-Cter in SUMO2) cross-links involve residues lysine 184 and lysine 242.

Belongs to the BRMS1 family. As to quaternary structure, homohexamer (Potential). Interacts with SNX6, HDAC1 and RELA. Interacts with ARID4A. Identified in mSin3A corepressor complexes together with SIN3A, SIN3B, RBBP4, RBBP7, SAP30, SUDS3, ARID4A, HDAC1 and HDAC2. Interacts with SPOP; this recruits the protein to a ubiquitin ligase complex containing SPOP and CUL3. Post-translationally, ubiquitinated by a cullin-RING-based BCR (BTB-CUL3-RBX1) E3 ubiquitin-protein ligase complex containing SPOP, leading to proteasomal degradation.

The protein localises to the nucleus. It is found in the cytoplasm. Functionally, transcriptional repressor. Down-regulates transcription activation by NF-kappa-B by promoting the deacetylation of RELA at 'Lys-310'. Promotes HDAC1 binding to promoter regions. Down-regulates expression of anti-apoptotic genes that are controlled by NF-kappa-B. Promotes apoptosis in cells that have inadequate adherence to a substrate, a process called anoikis, and may thereby inhibit metastasis. The polypeptide is Breast cancer metastasis-suppressor 1 homolog (Brms1) (Rattus norvegicus (Rat)).